A 152-amino-acid polypeptide reads, in one-letter code: 2-C-methyl-D-erythritol 2,4-cyclodiphosphate synthase (152 aa).

Positions 8 and 10 each coordinate a divalent metal cation. Residues 8–10 (DSH) and 34–35 (HS) each bind 4-CDP-2-C-methyl-D-erythritol 2-phosphate. Residue histidine 42 coordinates a divalent metal cation. 4-CDP-2-C-methyl-D-erythritol 2-phosphate-binding positions include 56–58 (DIG), 61–65 (FPDTD), 100–106 (LDRPKLG), and 131–135 (FKTSE).

Belongs to the IspF family. Homotrimer. Requires a divalent metal cation as cofactor.

It carries out the reaction 4-CDP-2-C-methyl-D-erythritol 2-phosphate = 2-C-methyl-D-erythritol 2,4-cyclic diphosphate + CMP. It participates in isoprenoid biosynthesis; isopentenyl diphosphate biosynthesis via DXP pathway; isopentenyl diphosphate from 1-deoxy-D-xylulose 5-phosphate: step 4/6. Involved in the biosynthesis of isopentenyl diphosphate (IPP) and dimethylallyl diphosphate (DMAPP), two major building blocks of isoprenoid compounds. Catalyzes the conversion of 4-diphosphocytidyl-2-C-methyl-D-erythritol 2-phosphate (CDP-ME2P) to 2-C-methyl-D-erythritol 2,4-cyclodiphosphate (ME-CPP) with a corresponding release of cytidine 5-monophosphate (CMP). In Thermus thermophilus (strain ATCC 27634 / DSM 579 / HB8), this protein is 2-C-methyl-D-erythritol 2,4-cyclodiphosphate synthase.